The primary structure comprises 455 residues: Bleomycin hydrolase (455 aa).

Met-1 bears the N-acetylmethionine mark. Residues Cys-73 and His-372 contribute to the active site. Position 391 is an N6-acetyllysine (Lys-391). Asn-396 is a catalytic residue.

It belongs to the peptidase C1 family. In terms of assembly, homohexamer. Interacts with NUDT12 (via ANK repeats).

The protein localises to the cytoplasm. It is found in the cytoplasmic granule. The catalysed reaction is Inactivates bleomycin B2 (a cytotoxic glycometallopeptide) by hydrolysis of a carboxyamide bond of beta-aminoalanine, but also shows general aminopeptidase activity. The specificity varies somewhat with source, but amino acid arylamides of Met, Leu and Ala are preferred.. The normal physiological role of BLM hydrolase is unknown, but it catalyzes the inactivation of the antitumor drug BLM (a glycopeptide) by hydrolyzing the carboxamide bond of its B-aminoalaninamide moiety thus protecting normal and malignant cells from BLM toxicity. This chain is Bleomycin hydrolase (BLMH), found in Homo sapiens (Human).